The chain runs to 309 residues: Acetolactate synthase small subunit, mitochondrial (309 aa).

The N-terminal 24 residues, 1-24 (MLRSLLQSGHRRVVASSCATMVRC), are a transit peptide targeting the mitochondrion. Residues 79–159 (VLNCLVQNEP…DYTNSEIIKR (81 aa)) form the ACT domain.

The protein belongs to the acetolactate synthase small subunit family. As to quaternary structure, the acetolactate synthase complex contains the catalytic regulatory subunit ILV2 and the regulatory small subunit ILV6.

The protein localises to the mitochondrion. The protein operates within amino-acid biosynthesis; L-isoleucine biosynthesis; L-isoleucine from 2-oxobutanoate: step 1/4. Its pathway is amino-acid biosynthesis; L-valine biosynthesis; L-valine from pyruvate: step 1/4. Its function is as follows. Regulatory subunit of mitochondrial acetolactate synthase, which catalyzes the first of a series of common steps in the biosynthesis of the branched-chain amino acids. Stimulates activity of the acetolactate synthase catalytic subunit ILV2 seven- to tenfold and confers sensitivity to inhibition by valine and activation by ATP. The protein is Acetolactate synthase small subunit, mitochondrial (ILV6) of Saccharomyces cerevisiae (strain ATCC 204508 / S288c) (Baker's yeast).